A 544-amino-acid polypeptide reads, in one-letter code: Zinc finger protein 502 (544 aa).

K43 participates in a covalent cross-link: Glycyl lysine isopeptide (Lys-Gly) (interchain with G-Cter in SUMO2). C2H2-type zinc fingers lie at residues 155–177 (WKCNECGKTFTQSSSLTQHQRTH), 183–205 (YTCEECGKAFSRSSFLVQHQRIH), 211–233 (YGCEQCGKTFRCRSFLTQHQRIH), 239–261 (YKCNECGNSFRNHSHLTEHQRIH), 267–289 (YKCNRCGKAFNQNTHLIHHQRIH), 295–317 (YICSECGSSFRKHSNLTQHQRIH), 323–345 (HKCDECGKTFQTKANLSQHQRIH), 351–373 (YKCKECGKAFCQSPSLIKHQRIH), 379–401 (YKCKECGKAFTQSTPLTKHQRIH), 407–429 (YKCSECGKAFIQSICLIRHQRSH), 435–457 (YKCNECGKGFNQNTCLTQHMRIH), 463–485 (YKCKECGKAFAHSSSLTEHHRTH), 491–513 (YKCSECEKTFRKYAHLSEHYRIH), and 519–541 (YECIECGKFFRHSSVLFRHQKLH).

This sequence belongs to the krueppel C2H2-type zinc-finger protein family. (Microbial infection) Interacts with human respiratory syncytial virus (HRSV) matrix protein; this interaction probably facilitates viral release.

The protein resides in the nucleus. May be involved in transcriptional regulation. This Homo sapiens (Human) protein is Zinc finger protein 502 (ZNF502).